Reading from the N-terminus, the 1331-residue chain is Disease resistance protein RUN1 (1331 aa).

A disordered region spans residues 1 to 20; it reads MASTSSSRASSSSSSSSTPS. The TIR domain occupies 25-190; the sequence is ITYDVFLSFR…EITDSIFRRL (166 aa). NAD(+)-binding positions include 34 to 39 and glycine 66; that span reads RGEDTR. Glutamate 100 is an active-site residue. In terms of domain architecture, NB-ARC spans 206 to 434; the sequence is SHVKEMIWRL…REPEAEILSV (229 aa). LRR repeat units lie at residues 429 to 452, 480 to 509, 540 to 565, 616 to 638, 648 to 673, 684 to 708, 709 to 732, 734 to 756, 757 to 779, 781 to 803, 804 to 826, 828 to 850, 851 to 873, 875 to 897, 898 to 920, 922 to 944, 945 to 967, 969 to 991, 992 to 1014, and 1017 to 1040; these read AEIL…IFLD, IKNL…GWEI, IKRV…AFAK, SYEL…NFDG, CSNI…SYSR, MPNL…VGNM, KKLT…IGDL, SLEI…GGNM, KSLT…IGDL, SLKY…GGNM, KSLR…IRDL, SLER…GGNM, KSLM…IGDL, SLVS…GGNM, KSLN…IGDL, SLMR…VGNM, KSLE…IGDL, and LEKL…AIDA. Residues 1287–1291 carry the Nuclear localization signal motif; it reads RKRRR.

The protein belongs to the disease resistance TIR-NB-LRR family.

The protein resides in the nucleus. It localises to the cytoplasm. The enzyme catalyses NAD(+) + H2O = ADP-D-ribose + nicotinamide + H(+). It catalyses the reaction NADP(+) + H2O = ADP-D-ribose 2'-phosphate + nicotinamide + H(+). Its function is as follows. Disease resistance (R) protein that confers resistance to multiple powdery and downy mildew by promoting cell death. Acts as a NAD(+) hydrolase (NADase): in response to activation, catalyzes cleavage of NAD(+) into ADP-D-ribose (ADPR) and nicotinamide; NAD(+) cleavage triggering a defense system that promotes cell death. Also able to hydrolyze NADP(+), but not other NAD(+)-related molecules. The polypeptide is Disease resistance protein RUN1 (Vitis rotundifolia (Muscadine grape)).